Consider the following 597-residue polypeptide: 2-succinyl-5-enolpyruvyl-6-hydroxy-3-cyclohexene-1-carboxylate synthase (597 aa).

This sequence belongs to the TPP enzyme family. MenD subfamily. In terms of assembly, homodimer. Mg(2+) serves as cofactor. Requires Mn(2+) as cofactor. The cofactor is thiamine diphosphate.

It carries out the reaction isochorismate + 2-oxoglutarate + H(+) = 5-enolpyruvoyl-6-hydroxy-2-succinyl-cyclohex-3-ene-1-carboxylate + CO2. It participates in quinol/quinone metabolism; 1,4-dihydroxy-2-naphthoate biosynthesis; 1,4-dihydroxy-2-naphthoate from chorismate: step 2/7. The protein operates within cofactor biosynthesis; phylloquinone biosynthesis. Catalyzes the thiamine diphosphate-dependent decarboxylation of 2-oxoglutarate and the subsequent addition of the resulting succinic semialdehyde-thiamine pyrophosphate anion to isochorismate to yield 2-succinyl-5-enolpyruvyl-6-hydroxy-3-cyclohexene-1-carboxylate (SEPHCHC). The sequence is that of 2-succinyl-5-enolpyruvyl-6-hydroxy-3-cyclohexene-1-carboxylate synthase from Synechococcus sp. (strain JA-3-3Ab) (Cyanobacteria bacterium Yellowstone A-Prime).